A 410-amino-acid polypeptide reads, in one-letter code: Imidazolonepropionase (410 aa).

Fe(3+)-binding residues include histidine 73 and histidine 75. Zn(2+)-binding residues include histidine 73 and histidine 75. 4-imidazolone-5-propanoate-binding residues include arginine 82, tyrosine 145, and histidine 178. Tyrosine 145 is an N-formimidoyl-L-glutamate binding site. Fe(3+) is bound at residue histidine 243. Histidine 243 contacts Zn(2+). Glutamine 246 contacts 4-imidazolone-5-propanoate. Fe(3+) is bound at residue aspartate 318. Aspartate 318 serves as a coordination point for Zn(2+). Positions 320 and 322 each coordinate N-formimidoyl-L-glutamate. Serine 323 provides a ligand contact to 4-imidazolone-5-propanoate.

Belongs to the metallo-dependent hydrolases superfamily. HutI family. Zn(2+) is required as a cofactor. It depends on Fe(3+) as a cofactor.

It is found in the cytoplasm. The enzyme catalyses 4-imidazolone-5-propanoate + H2O = N-formimidoyl-L-glutamate. The protein operates within amino-acid degradation; L-histidine degradation into L-glutamate; N-formimidoyl-L-glutamate from L-histidine: step 3/3. In terms of biological role, catalyzes the hydrolytic cleavage of the carbon-nitrogen bond in imidazolone-5-propanoate to yield N-formimidoyl-L-glutamate. It is the third step in the universal histidine degradation pathway. The polypeptide is Imidazolonepropionase (Shewanella frigidimarina (strain NCIMB 400)).